We begin with the raw amino-acid sequence, 94 residues long: Large ribosomal subunit protein bL25 (94 aa).

The protein belongs to the bacterial ribosomal protein bL25 family. In terms of assembly, part of the 50S ribosomal subunit; part of the 5S rRNA/L5/L18/L25 subcomplex. Contacts the 5S rRNA. Binds to the 5S rRNA independently of L5 and L18.

This is one of the proteins that binds to the 5S RNA in the ribosome where it forms part of the central protuberance. The protein is Large ribosomal subunit protein bL25 of Sodalis glossinidius (strain morsitans).